We begin with the raw amino-acid sequence, 249 residues long: Coproheme decarboxylase (249 aa).

Residues Arg-131, 145 to 149, His-172, and Gln-185 each bind Fe-coproporphyrin III; that span reads YPMDK. Tyr-145 is a catalytic residue.

Belongs to the ChdC family. Type 1 subfamily. The cofactor is Fe-coproporphyrin III.

It carries out the reaction Fe-coproporphyrin III + 2 H2O2 + 2 H(+) = heme b + 2 CO2 + 4 H2O. The enzyme catalyses Fe-coproporphyrin III + H2O2 + H(+) = harderoheme III + CO2 + 2 H2O. It catalyses the reaction harderoheme III + H2O2 + H(+) = heme b + CO2 + 2 H2O. The protein operates within porphyrin-containing compound metabolism; protoheme biosynthesis. In terms of biological role, involved in coproporphyrin-dependent heme b biosynthesis. Catalyzes the decarboxylation of Fe-coproporphyrin III (coproheme) to heme b (protoheme IX), the last step of the pathway. The reaction occurs in a stepwise manner with a three-propionate intermediate. The protein is Coproheme decarboxylase of Staphylococcus saprophyticus subsp. saprophyticus (strain ATCC 15305 / DSM 20229 / NCIMB 8711 / NCTC 7292 / S-41).